A 668-amino-acid polypeptide reads, in one-letter code: DNA ligase (668 aa).

NAD(+) contacts are provided by residues 34 to 38 (DTEYD), 83 to 84 (SL), and Glu114. The active-site N6-AMP-lysine intermediate is the Lys116. NAD(+) contacts are provided by Arg137, Glu171, Lys286, and Lys310. Zn(2+)-binding residues include Cys404, Cys407, Cys422, and Cys427. The region spanning 588–668 (NSDSIIANKS…FFDLLKSEKG (81 aa)) is the BRCT domain.

Belongs to the NAD-dependent DNA ligase family. LigA subfamily. Mg(2+) is required as a cofactor. It depends on Mn(2+) as a cofactor.

It catalyses the reaction NAD(+) + (deoxyribonucleotide)n-3'-hydroxyl + 5'-phospho-(deoxyribonucleotide)m = (deoxyribonucleotide)n+m + AMP + beta-nicotinamide D-nucleotide.. In terms of biological role, DNA ligase that catalyzes the formation of phosphodiester linkages between 5'-phosphoryl and 3'-hydroxyl groups in double-stranded DNA using NAD as a coenzyme and as the energy source for the reaction. It is essential for DNA replication and repair of damaged DNA. This Mycoplasma mycoides subsp. mycoides SC (strain CCUG 32753 / NCTC 10114 / PG1) protein is DNA ligase.